Reading from the N-terminus, the 86-residue chain is Progonadoliberin-2 (86 aa).

The first 24 residues, 1–24 (MVSVARLVFMLGPLLCLGAQLSSS), serve as a signal peptide directing secretion. Residue Gln25 is modified to Pyrrolidone carboxylic acid. Residue Gly34 is modified to Glycine amide.

Belongs to the GnRH family.

The protein resides in the secreted. In terms of biological role, stimulates the secretion of gonadotropins. This is Progonadoliberin-2 (gnrh2) from Oncorhynchus mykiss (Rainbow trout).